The following is a 138-amino-acid chain: Acidic phospholipase A2 Tpu-E6a (138 aa).

An N-terminal signal peptide occupies residues 1–16; that stretch reads MRTLWIMAVLLLGVKG. Cystine bridges form between Cys42–Cys131, Cys44–Cys60, Cys59–Cys111, Cys65–Cys138, Cys66–Cys104, Cys73–Cys97, and Cys91–Cys102. The Ca(2+) site is built by Tyr43, Gly45, and Gly47. Residue His63 is part of the active site. Residue Asp64 participates in Ca(2+) binding. The active site involves Asp105.

As to quaternary structure, monomer. Requires Ca(2+) as cofactor. In terms of tissue distribution, expressed by the venom gland.

It localises to the secreted. The enzyme catalyses a 1,2-diacyl-sn-glycero-3-phosphocholine + H2O = a 1-acyl-sn-glycero-3-phosphocholine + a fatty acid + H(+). Snake venom phospholipase A2 (PLA2) that impairs hemostasis. It weakly inhibits ADP-induced platelet aggregation when tested on platelet rich plasma from human and rabbit blood (15-25% of inhibition at 5-10 ug of enzyme), and dose-dependently inhibits blood coagulation, possibly by inhibiting thrombin activation. Exhibits high hydrolytic activities toward L-dipalmitoyl phosphatidylcholine. PLA2 catalyzes the calcium-dependent hydrolysis of the 2-acyl groups in 3-sn-phosphoglycerides. The sequence is that of Acidic phospholipase A2 Tpu-E6a from Craspedocephalus puniceus (Flat-nosed pitviper).